A 461-amino-acid polypeptide reads, in one-letter code: Cysteine--tRNA ligase (461 aa).

Cys-28 contributes to the Zn(2+) binding site. A 'HIGH' region motif is present at residues 30–40 (ITVYDLCHIGH). Residues Cys-209, His-234, and Glu-238 each contribute to the Zn(2+) site. Residues 266–270 (KMSKS) carry the 'KMSKS' region motif. Position 269 (Lys-269) interacts with ATP.

It belongs to the class-I aminoacyl-tRNA synthetase family. As to quaternary structure, monomer. Zn(2+) serves as cofactor.

It localises to the cytoplasm. The enzyme catalyses tRNA(Cys) + L-cysteine + ATP = L-cysteinyl-tRNA(Cys) + AMP + diphosphate. The sequence is that of Cysteine--tRNA ligase from Salmonella dublin (strain CT_02021853).